We begin with the raw amino-acid sequence, 226 residues long: 8-oxoguanine DNA glycosylase/AP lyase (226 aa).

Residues lysine 149 and aspartate 167 contribute to the active site.

The protein belongs to the type-2 OGG1 family.

The catalysed reaction is 2'-deoxyribonucleotide-(2'-deoxyribose 5'-phosphate)-2'-deoxyribonucleotide-DNA = a 3'-end 2'-deoxyribonucleotide-(2,3-dehydro-2,3-deoxyribose 5'-phosphate)-DNA + a 5'-end 5'-phospho-2'-deoxyribonucleoside-DNA + H(+). Catalyzes the excision of an oxidatively damaged form of guanine (7,8-dihydro-8-oxoguanine = 8-oxoG) from DNA. Also cleaves the DNA backbone at apurinic/apyrimidinic sites (AP sites). The protein is 8-oxoguanine DNA glycosylase/AP lyase of Aquifex aeolicus (strain VF5).